A 961-amino-acid polypeptide reads, in one-letter code: Retinoblastoma-related protein 1 (961 aa).

The interval 404 to 606 is domain A; the sequence is TPVSTAMTTA…EKGSSMYNSL (203 aa). Residues 404–819 form a pocket region; that stretch reads TPVSTAMTTA…NEMFIPSVKP (416 aa). The interval 607–728 is spacer; sequence AVAKPSLAAE…PGGGGETCAE (122 aa). Residues 729–819 form a domain B region; the sequence is TAINVFFGKI…NEMFIPSVKP (91 aa). Positions 829-856 are disordered; sequence NAEKNNHNDGQGPASPKPSPFPKLPDMS.

It belongs to the retinoblastoma protein (RB) family.

It localises to the nucleus. Regulator of biological processes that recruits a histone deacetylase to control gene transcription. May play a role in the entry into mitosis, negatively regulating the cell proliferation. Formation of stable complexes with geminiviridae replication-associated proteins may create a cellular environment which favors viral DNA replication. In Nicotiana tabacum (Common tobacco), this protein is Retinoblastoma-related protein 1 (RB1).